Consider the following 243-residue polypeptide: 7-cyano-7-deazaguanine synthase (243 aa).

Residue 9 to 19 (FSGGQDSTTCL) coordinates ATP. Positions 205, 220, 223, and 226 each coordinate Zn(2+).

The protein belongs to the QueC family. Requires Zn(2+) as cofactor.

It carries out the reaction 7-carboxy-7-deazaguanine + NH4(+) + ATP = 7-cyano-7-deazaguanine + ADP + phosphate + H2O + H(+). It participates in purine metabolism; 7-cyano-7-deazaguanine biosynthesis. In terms of biological role, catalyzes the ATP-dependent conversion of 7-carboxy-7-deazaguanine (CDG) to 7-cyano-7-deazaguanine (preQ(0)). This chain is 7-cyano-7-deazaguanine synthase, found in Albidiferax ferrireducens (strain ATCC BAA-621 / DSM 15236 / T118) (Rhodoferax ferrireducens).